A 276-amino-acid polypeptide reads, in one-letter code: Nickel import system permease protein NikC (276 aa).

5 helical membrane passes run 10 to 30, 73 to 93, 108 to 128, 186 to 206, and 238 to 258; these read LIFF…FFVS, LFVT…LGLF, FIDV…ASFF, IIPA…LYIS, and IMLI…NLTG. Residues 69 to 258 form the ABC transmembrane type-1 domain; sequence ARSTLFVTVL…ITILIFNLTG (190 aa).

This sequence belongs to the binding-protein-dependent transport system permease family. OppBC subfamily. As to quaternary structure, the complex is composed of two ATP-binding proteins (NikD and NikE), two transmembrane proteins (NikB and NikC) and a solute-binding protein (NikA).

It is found in the cell membrane. Part of the ABC transporter complex NikABCDE (Opp2) involved in nickel import. Probably responsible for the translocation of the substrate across the membrane. The polypeptide is Nickel import system permease protein NikC (Staphylococcus aureus (strain Mu50 / ATCC 700699)).